We begin with the raw amino-acid sequence, 323 residues long: Beta-ketoacyl-[acyl-carrier-protein] synthase III (323 aa).

Residues Cys114 and His250 contribute to the active site. Residues Gln251–Arg255 form an ACP-binding region. Asn280 is an active-site residue.

The protein belongs to the thiolase-like superfamily. FabH family. Homodimer.

The protein localises to the cytoplasm. It catalyses the reaction malonyl-[ACP] + acetyl-CoA + H(+) = 3-oxobutanoyl-[ACP] + CO2 + CoA. It functions in the pathway lipid metabolism; fatty acid biosynthesis. Its function is as follows. Catalyzes the condensation reaction of fatty acid synthesis by the addition to an acyl acceptor of two carbons from malonyl-ACP. Catalyzes the first condensation reaction which initiates fatty acid synthesis and may therefore play a role in governing the total rate of fatty acid production. Possesses both acetoacetyl-ACP synthase and acetyl transacylase activities. Its substrate specificity determines the biosynthesis of branched-chain and/or straight-chain of fatty acids. The protein is Beta-ketoacyl-[acyl-carrier-protein] synthase III of Alkalilimnicola ehrlichii (strain ATCC BAA-1101 / DSM 17681 / MLHE-1).